The chain runs to 238 residues: Ditrans,polycis-undecaprenyl-diphosphate synthase ((2E,6E)-farnesyl-diphosphate specific) (238 aa).

Asp-14 is an active-site residue. A Mg(2+)-binding site is contributed by Asp-14. Substrate is bound by residues 15–18, Trp-19, Arg-27, His-31, and 59–61; these read GNGR and SSE. Asn-62 serves as the catalytic Proton acceptor. Residues Trp-63, Arg-65, Arg-182, and 188–190 contribute to the substrate site; that span reads RIS. A Mg(2+)-binding site is contributed by Glu-201.

Belongs to the UPP synthase family. Homodimer. The cofactor is Mg(2+).

It catalyses the reaction 8 isopentenyl diphosphate + (2E,6E)-farnesyl diphosphate = di-trans,octa-cis-undecaprenyl diphosphate + 8 diphosphate. Functionally, catalyzes the sequential condensation of isopentenyl diphosphate (IPP) with (2E,6E)-farnesyl diphosphate (E,E-FPP) to yield (2Z,6Z,10Z,14Z,18Z,22Z,26Z,30Z,34E,38E)-undecaprenyl diphosphate (di-trans,octa-cis-UPP). UPP is the precursor of glycosyl carrier lipid in the biosynthesis of bacterial cell wall polysaccharide components such as peptidoglycan and lipopolysaccharide. In Legionella pneumophila subsp. pneumophila (strain Philadelphia 1 / ATCC 33152 / DSM 7513), this protein is Ditrans,polycis-undecaprenyl-diphosphate synthase ((2E,6E)-farnesyl-diphosphate specific).